We begin with the raw amino-acid sequence, 381 residues long: L-lactate dehydrogenase (381 aa).

Residues 1 to 380 enclose the FMN hydroxy acid dehydrogenase domain; the sequence is MIISASTDYR…NRDSLAVSER (380 aa). Y24 serves as a coordination point for substrate. FMN is bound by residues S106 and Q127. Substrate is bound at residue Y129. T155 is an FMN binding site. R164 is a binding site for substrate. K251 is an FMN binding site. H275 serves as the catalytic Proton acceptor. R278 contacts substrate. An FMN-binding site is contributed by 306 to 330; it reads DSGIRTGLDVVRMIALGADSVLLGR.

It belongs to the FMN-dependent alpha-hydroxy acid dehydrogenase family. It depends on FMN as a cofactor.

It is found in the cell inner membrane. The catalysed reaction is (S)-lactate + A = pyruvate + AH2. Functionally, catalyzes the conversion of L-lactate to pyruvate. Is coupled to the respiratory chain. This Yersinia pseudotuberculosis serotype O:1b (strain IP 31758) protein is L-lactate dehydrogenase.